Reading from the N-terminus, the 224-residue chain is Ribosomal RNA large subunit methyltransferase E (224 aa).

G64, W66, D97, D113, and D138 together coordinate S-adenosyl-L-methionine. K178 functions as the Proton acceptor in the catalytic mechanism.

This sequence belongs to the class I-like SAM-binding methyltransferase superfamily. RNA methyltransferase RlmE family.

Its subcellular location is the cytoplasm. The enzyme catalyses uridine(2552) in 23S rRNA + S-adenosyl-L-methionine = 2'-O-methyluridine(2552) in 23S rRNA + S-adenosyl-L-homocysteine + H(+). In terms of biological role, specifically methylates the uridine in position 2552 of 23S rRNA at the 2'-O position of the ribose in the fully assembled 50S ribosomal subunit. This is Ribosomal RNA large subunit methyltransferase E from Methylibium petroleiphilum (strain ATCC BAA-1232 / LMG 22953 / PM1).